We begin with the raw amino-acid sequence, 268 residues long: Fatty acid elongase sre1 (268 aa).

7 helical membrane-spanning segments follow: residues 31-51, 62-82, 110-130, 137-157, 161-181, 198-218, and 227-247; these read VFPF…QAIM, FSII…SGVM, IGFW…DTVI, PIIF…WQWL, WLVG…LMYY, ITKA…YWFV, and APLS…ILFG.

Belongs to the ELO family.

The protein resides in the membrane. It carries out the reaction a very-long-chain acyl-CoA + malonyl-CoA + H(+) = a very-long-chain 3-oxoacyl-CoA + CO2 + CoA. Its function is as follows. Could be implicated in synthesis of very long chain fatty acids. The sequence is that of Fatty acid elongase sre1 (sre1) from Dictyostelium discoideum (Social amoeba).